The following is a 119-amino-acid chain: Small ribosomal subunit protein uS13m (119 aa).

Belongs to the universal ribosomal protein uS13 family. In terms of assembly, part of the small ribosomal subunit.

The protein resides in the mitochondrion. In terms of biological role, located at the top of the head of the small subunit, it contacts several helices of the small subunit rRNA. The protein is Small ribosomal subunit protein uS13m (RPS13) of Prototheca wickerhamii.